The sequence spans 187 residues: CASP-like protein 3A2 (187 aa).

The Cytoplasmic portion of the chain corresponds to 1–24 (MTSNGEGGEVVAKRRRKGIKELVQ). A helical membrane pass occupies residues 25–45 (VALRGGCLAASATAMAVMLTA). The Extracellular portion of the chain corresponds to 46–71 (TEEGVADIYGFKLTLSSNWSFSPSYQ). Asparagine 63 carries an N-linked (GlcNAc...) asparagine glycan. A helical membrane pass occupies residues 72–92 (YVVGACAGTVLYSLLQLCLGV). Over 93–107 (YRLVTGSPITPSRFQ) the chain is Cytoplasmic. Residues 108 to 128 (AWLCFTSDQLFCYLMMSAGSA) form a helical membrane-spanning segment. Residues 129–162 (GSGVTNLNKTGIRHTPLPDFCKTLSSFCNHVALS) lie on the Extracellular side of the membrane. An N-linked (GlcNAc...) asparagine glycan is attached at asparagine 136. Residues 163–183 (LLLVFLSFIFLASSSFFTVLV) form a helical membrane-spanning segment. At 184-187 (LSTP) the chain is on the cytoplasmic side.

It belongs to the Casparian strip membrane proteins (CASP) family. As to quaternary structure, homodimer and heterodimers.

The protein localises to the cell membrane. The sequence is that of CASP-like protein 3A2 from Arabidopsis thaliana (Mouse-ear cress).